The chain runs to 860 residues: Beta-glucosidase A (860 aa).

Positions 1–19 (MRFTLIEAVALTAVSLASA) are cleaved as a signal peptide. N-linked (GlcNAc...) asparagine glycans are attached at residues asparagine 61, asparagine 211, and asparagine 252. Aspartate 280 is an active-site residue. Residues asparagine 315, asparagine 322, asparagine 354, asparagine 387, asparagine 442, asparagine 523, asparagine 542, asparagine 564, asparagine 658, asparagine 690, and asparagine 712 are each glycosylated (N-linked (GlcNAc...) asparagine). The interval 719–753 (SSGDASYGQDSSDYLPEGATDGSAQPILPAGGGPG) is disordered.

It belongs to the glycosyl hydrolase 3 family.

The protein resides in the secreted. The enzyme catalyses Hydrolysis of terminal, non-reducing beta-D-glucosyl residues with release of beta-D-glucose.. The protein operates within glycan metabolism; cellulose degradation. Its function is as follows. Beta-glucosidases are one of a number of cellulolytic enzymes involved in the degradation of cellulosic biomass. Catalyzes the last step releasing glucose from the inhibitory cellobiose. This chain is Beta-glucosidase A (bglA), found in Aspergillus kawachii (strain NBRC 4308) (White koji mold).